A 537-amino-acid chain; its full sequence is Tyrosine-protein kinase Fyn (537 aa).

Gly2 carries N-myristoyl glycine lipidation. S-palmitoyl cysteine attachment occurs at residues Cys3 and Cys6. Thr12 carries the post-translational modification Phosphothreonine; by PKC. Residues 14–35 (LTEERDGSLNQSSGYRYGTDPT) form a disordered region. Phosphoserine occurs at positions 21 and 26. The SH3 domain occupies 82 to 143 (TGVTLFVALY…PSNYVAPVDS (62 aa)). Residues 149 to 246 (WYFGKLGRKD…GLCCRLVVPC (98 aa)) enclose the SH2 domain. A Phosphotyrosine modification is found at Tyr185. The Protein kinase domain maps to 271–524 (LQLIKRLGNG…YLQSFLEDYF (254 aa)). ATP is bound by residues 277–285 (LGNGQFGEV) and Lys299. Asp390 acts as the Proton acceptor in catalysis. Tyr420 carries the phosphotyrosine; by autocatalysis modification. At Tyr531 the chain carries Phosphotyrosine; by CSK.

It belongs to the protein kinase superfamily. Tyr protein kinase family. SRC subfamily. In terms of assembly, interacts (via its SH3 domain) with PIK3R1 and PRMT8. Interacts with FYB1, PAG1, and SH2D1A. Interacts with CD79A (tyrosine-phosphorylated form); the interaction increases FYN activity. Interacts (via SH2 domain) with CSF1R (tyrosine phosphorylated). Interacts with TOM1L1 (phosphorylated form). Interacts with KDR (tyrosine phosphorylated). Interacts (via SH3 domain) with KLHL2 (via N-terminus). Interacts with SH2D1A and SLAMF1. Interacts with ITCH; the interaction phosphorylates ITCH and negatively regulates its activity. Interacts with FASLG. Interacts with RUNX3. Interacts with KIT. Interacts with EPHA8; possible downstream effector of EPHA8 in regulation of cell adhesion. Interacts with PTK2/FAK1; this interaction leads to PTK2/FAK1 phosphorylation and activation. Interacts with CAV1; this interaction couples integrins to the Ras-ERK pathway. Interacts with UNC119. Interacts (via SH2 domain) with PTPRH (phosphorylated form). Interacts with PTPRO (phosphorylated form). Interacts with PTPRB (phosphorylated form). Interacts with FYB2. Interacts with DSCAM. Interacts with SKAP1 and FYB1; this interaction promotes the phosphorylation of CLNK. Interacts with NEDD9; in the presence of PTK2. As to quaternary structure, (Microbial infection) Interacts (via its SH3 domain) with hepatitis E virus/HEV protein ORF3. Mn(2+) is required as a cofactor. Post-translationally, autophosphorylated at Tyr-420. Phosphorylation on the C-terminal tail at Tyr-531 by CSK maintains the enzyme in an inactive state. PTPRC/CD45 dephosphorylates Tyr-531 leading to activation. Ultraviolet B (UVB) strongly increase phosphorylation at Thr-12 and kinase activity, and promotes translocation from the cytoplasm to the nucleus. Dephosphorylation at Tyr-420 by PTPN2 negatively regulates T-cell receptor signaling. Phosphorylated at tyrosine residues, which can be enhanced by NTN1. In terms of processing, palmitoylated. Palmitoylation at Cys-3 and Cys-6, probably by ZDHHC21, regulates subcellular location. Isoform 1 is highly expressed in the brain. Isoform 2 is expressed in cells of hemopoietic lineages, especially T-lymphocytes.

It localises to the cytoplasm. The protein resides in the nucleus. The protein localises to the cell membrane. It is found in the perikaryon. It catalyses the reaction L-tyrosyl-[protein] + ATP = O-phospho-L-tyrosyl-[protein] + ADP + H(+). With respect to regulation, inhibited by phosphorylation of Tyr-531 by leukocyte common antigen and activated by dephosphorylation of this site. Functionally, non-receptor tyrosine-protein kinase that plays a role in many biological processes including regulation of cell growth and survival, cell adhesion, integrin-mediated signaling, cytoskeletal remodeling, cell motility, immune response and axon guidance. Inactive FYN is phosphorylated on its C-terminal tail within the catalytic domain. Following activation by PKA, the protein subsequently associates with PTK2/FAK1, allowing PTK2/FAK1 phosphorylation, activation and targeting to focal adhesions. Involved in the regulation of cell adhesion and motility through phosphorylation of CTNNB1 (beta-catenin) and CTNND1 (delta-catenin). Regulates cytoskeletal remodeling by phosphorylating several proteins including the actin regulator WAS and the microtubule-associated proteins MAP2 and MAPT. Promotes cell survival by phosphorylating AGAP2/PIKE-A and preventing its apoptotic cleavage. Participates in signal transduction pathways that regulate the integrity of the glomerular slit diaphragm (an essential part of the glomerular filter of the kidney) by phosphorylating several slit diaphragm components including NPHS1, KIRREL1 and TRPC6. Plays a role in neural processes by phosphorylating DPYSL2, a multifunctional adapter protein within the central nervous system, ARHGAP32, a regulator for Rho family GTPases implicated in various neural functions, and SNCA, a small pre-synaptic protein. Involved in reelin signaling by mediating phosphorylation of DAB1 following reelin (RELN)-binding to its receptor. Participates in the downstream signaling pathways that lead to T-cell differentiation and proliferation following T-cell receptor (TCR) stimulation. Phosphorylates PTK2B/PYK2 in response to T-cell receptor activation. Also participates in negative feedback regulation of TCR signaling through phosphorylation of PAG1, thereby promoting interaction between PAG1 and CSK and recruitment of CSK to lipid rafts. CSK maintains LCK and FYN in an inactive form. Promotes CD28-induced phosphorylation of VAV1. In mast cells, phosphorylates CLNK after activation of immunoglobulin epsilon receptor signaling. Can also promote CD244-mediated NK cell activation. This Homo sapiens (Human) protein is Tyrosine-protein kinase Fyn (FYN).